A 255-amino-acid chain; its full sequence is Malonyl-[acyl-carrier protein] O-methyltransferase (255 aa).

It belongs to the methyltransferase superfamily.

The enzyme catalyses malonyl-[ACP] + S-adenosyl-L-methionine = malonyl-[ACP] methyl ester + S-adenosyl-L-homocysteine. The protein operates within cofactor biosynthesis; biotin biosynthesis. Its function is as follows. Converts the free carboxyl group of a malonyl-thioester to its methyl ester by transfer of a methyl group from S-adenosyl-L-methionine (SAM). It allows to synthesize pimeloyl-ACP via the fatty acid synthetic pathway. This chain is Malonyl-[acyl-carrier protein] O-methyltransferase, found in Porphyromonas gingivalis (strain ATCC BAA-308 / W83).